A 128-amino-acid chain; its full sequence is Aspartate 1-decarboxylase (128 aa).

The active-site Schiff-base intermediate with substrate; via pyruvic acid is the Ser-25. Ser-25 carries the post-translational modification Pyruvic acid (Ser). Residue Thr-57 participates in substrate binding. Tyr-58 functions as the Proton donor in the catalytic mechanism. Residue 73 to 75 (GSA) coordinates substrate.

Belongs to the PanD family. As to quaternary structure, heterooctamer of four alpha and four beta subunits. Requires pyruvate as cofactor. Is synthesized initially as an inactive proenzyme, which is activated by self-cleavage at a specific serine bond to produce a beta-subunit with a hydroxyl group at its C-terminus and an alpha-subunit with a pyruvoyl group at its N-terminus.

Its subcellular location is the cytoplasm. It catalyses the reaction L-aspartate + H(+) = beta-alanine + CO2. It functions in the pathway cofactor biosynthesis; (R)-pantothenate biosynthesis; beta-alanine from L-aspartate: step 1/1. In terms of biological role, catalyzes the pyruvoyl-dependent decarboxylation of aspartate to produce beta-alanine. This Burkholderia vietnamiensis (strain G4 / LMG 22486) (Burkholderia cepacia (strain R1808)) protein is Aspartate 1-decarboxylase.